The sequence spans 333 residues: Acyl-CoA wax alcohol acyltransferase 2 (333 aa).

A run of 3 helical transmembrane segments spans residues 15-35 (VFAL…VIIV), 38-58 (YLVV…WLAF), and 130-150 (TFPG…VPFL).

The protein belongs to the diacylglycerol acyltransferase family. Monomer. In terms of tissue distribution, expressed in Mueller cells of the retina (at protein level). Abundant in tissues rich in sebaceous glands such as the preputial gland and eyelid.

It is found in the endoplasmic reticulum membrane. The catalysed reaction is a long chain fatty alcohol + a fatty acyl-CoA = a wax ester + CoA. It carries out the reaction all-trans-retinol + an acyl-CoA = an all-trans-retinyl ester + CoA. It catalyses the reaction an acyl-CoA + a 1,2-diacyl-sn-glycerol = a triacyl-sn-glycerol + CoA. The enzyme catalyses 9-cis-retinol + a fatty acyl-CoA = 9-cis-retinyl ester + CoA. The catalysed reaction is 11-cis-retinol + a fatty acyl-CoA = 11-cis-retinyl ester + CoA. It carries out the reaction 13-cis-retinol + a fatty acyl-CoA = 13-cis-retinyl ester + CoA. It catalyses the reaction a 1-acylglycerol + an acyl-CoA = a 1,2-diacylglycerol + CoA. The enzyme catalyses 1-O-alkylglycerol + an acyl-CoA = 1-O-alkyl-3-acylglycerol + CoA. The catalysed reaction is a 2-acylglycerol + an acyl-CoA = a 1,2-diacyl-sn-glycerol + CoA. It carries out the reaction 2-(9Z-octadecenoyl)-glycerol + hexadecanoyl-CoA = 1-hexadecanoyl-2-(9Z-octadecenoyl)-sn-glycerol + CoA. It catalyses the reaction 1,2-di-(9Z-octadecenoyl)-sn-glycerol + hexadecanoyl-CoA = 1,2-di-(9Z)-octadecenoyl-3-hexadecanoyl-sn-glycerol + CoA. The enzyme catalyses hexadecan-1-ol + hexadecanoyl-CoA = hexadecanyl hexadecanoate + CoA. The catalysed reaction is hexadecane-1,2-diol + hexadecanoyl-CoA = 2-hydroxyhexadecyl hexadecanoate + CoA. It carries out the reaction all-trans-retinol + hexadecanoyl-CoA = all-trans-retinyl hexadecanoate + CoA. It catalyses the reaction 1,2-di-(9Z-octadecenoyl)-sn-glycerol + (9Z)-octadecenoyl-CoA = 1,2,3-tri-(9Z-octadecenoyl)-glycerol + CoA. The enzyme catalyses hexadecan-1-ol + (9Z)-octadecenoyl-CoA = hexadecanyl (9Z)-octadecenoate + CoA. The catalysed reaction is (9Z)-hexadecen-1-ol + (9Z)-octadecenoyl-CoA = 1-O-(9Z)-hexadecenyl (9Z)-octadecenoate + CoA. It carries out the reaction octadecan-1-ol + (9Z)-octadecenoyl-CoA = 1-O-octadecyl (9Z)-octadecenoate + CoA. It catalyses the reaction (9Z)-octadecen-1-ol + (9Z)-octadecenoyl-CoA = 1-O-(9Z)-octadecenyl (9Z)-octadecenoate + CoA. The enzyme catalyses hexadecan-1-ol + (9Z)-hexadecenoyl-CoA = 1-O-hexadecyl (9Z)-hexadecenoate + CoA. The catalysed reaction is hexadecan-1-ol + octadecanoyl-CoA = hexadecanyl octadecanoate + CoA. It carries out the reaction 11-cis-retinol + hexadecanoyl-CoA = 11-cis-retinyl hexadecanoate + CoA. It catalyses the reaction 1-O-(9Z-octadecenyl)-glycerol + (9Z)-octadecenoyl-CoA = 1-O-(9Z-octadecyl)-3-(9Z-octadecenoyl)-glycerol + CoA. The enzyme catalyses 1-(9Z-octadecenoyl)-glycerol + (9Z)-octadecenoyl-CoA = 1,2-di-(9Z-octadecenoyl)-glycerol + CoA. The catalysed reaction is 11-cis-retinol + tetradecanoyl-CoA = 11-cis-retinyl tetradecanoate + CoA. It carries out the reaction 9-cis-retinol + tetradecanoyl-CoA = 9-cis-retinyl tetradecanoate + CoA. It catalyses the reaction 9-cis-retinol + hexadecanoyl-CoA = 9-cis-retinyl hexadecanoate + CoA. The enzyme catalyses 13-cis-retinol + tetradecanoyl-CoA = 13-cis-retinyl tetradecanoate + CoA. The catalysed reaction is all-trans-retinol + tetradecanoyl-CoA = all-trans-retinyl tetradecanoate + CoA. It carries out the reaction tetradecan-1-ol + tetradecanoyl-CoA = tetradecanyl tetradecanoate + CoA. Its activity is regulated as follows. 11-cis retinoids act as allosteric modulators of acyl-CoA retinol O-fatty-acyltransferase (ARAT) activity by suppressing esterification of 9-cis, 13-cis, or all-trans retinols concurrently increasing the enzyme specificity toward 11-cis isomer. Functionally, acyltransferase that catalyzes the formation of ester bonds between fatty alcohols and fatty acyl-CoAs to form wax monoesters. Shows a preference for medium chain acyl-CoAs from C12 to C16 in length and fatty alcohols shorter than C20, as the acyl donor and acceptor, respectively. Also possesses fatty acyl-CoA retinol acyltransferase (ARAT) activity that preferentially esterifies 11-cis-retinol, a chromophore precursor of bleached opsin pigments in cone cells. Shows higher catalytic efficiency toward 11-cis-retinol versus 9-cis-retinol, 13- cis-retinol and all-trans-retinol substrates. The sequence is that of Acyl-CoA wax alcohol acyltransferase 2 (Awat2) from Mus musculus (Mouse).